Consider the following 114-residue polypeptide: MNQYETVFILTPVLSDVQMKEAVEKFKGILQAEGAEIINEENWGLKKLAYPIQKKSTGFYQLIEFNAEPTVIDKLELNFRRDERVIRFLTFRMDKYAAEYAAKRRSVKSNKKED.

Belongs to the bacterial ribosomal protein bS6 family.

Functionally, binds together with bS18 to 16S ribosomal RNA. The polypeptide is Small ribosomal subunit protein bS6 (Bacteroides fragilis (strain YCH46)).